We begin with the raw amino-acid sequence, 211 residues long: Adenylate kinase (211 aa).

Residue 10–15 coordinates ATP; sequence GSGKGT. An NMP region spans residues 30-59; that stretch reads STGDLFRENILNSTALGQEIKKIVERGELV. AMP-binding positions include T31, R36, 57 to 59, 85 to 88, and Q92; these read ELV and GFPR. Positions 121-158 are LID; the sequence is GRRICKSCNNIFNIYTLTTKKNGICDVCGGDLYQREDD. Residue R122 coordinates ATP. Residues C125 and C128 each coordinate Zn(2+). 131–132 lines the ATP pocket; that stretch reads IF. Positions 145 and 148 each coordinate Zn(2+). The AMP site is built by R155 and R166. V194 provides a ligand contact to ATP.

This sequence belongs to the adenylate kinase family. As to quaternary structure, monomer.

It localises to the cytoplasm. The enzyme catalyses AMP + ATP = 2 ADP. The protein operates within purine metabolism; AMP biosynthesis via salvage pathway; AMP from ADP: step 1/1. In terms of biological role, catalyzes the reversible transfer of the terminal phosphate group between ATP and AMP. Plays an important role in cellular energy homeostasis and in adenine nucleotide metabolism. The chain is Adenylate kinase from Borreliella burgdorferi (strain ATCC 35210 / DSM 4680 / CIP 102532 / B31) (Borrelia burgdorferi).